Here is a 271-residue protein sequence, read N- to C-terminus: Ribosomal RNA small subunit methyltransferase A (271 aa).

His11, Leu13, Gly38, Glu59, Asp84, and Asn109 together coordinate S-adenosyl-L-methionine.

Belongs to the class I-like SAM-binding methyltransferase superfamily. rRNA adenine N(6)-methyltransferase family. RsmA subfamily.

Its subcellular location is the cytoplasm. It carries out the reaction adenosine(1518)/adenosine(1519) in 16S rRNA + 4 S-adenosyl-L-methionine = N(6)-dimethyladenosine(1518)/N(6)-dimethyladenosine(1519) in 16S rRNA + 4 S-adenosyl-L-homocysteine + 4 H(+). In terms of biological role, specifically dimethylates two adjacent adenosines (A1518 and A1519) in the loop of a conserved hairpin near the 3'-end of 16S rRNA in the 30S particle. May play a critical role in biogenesis of 30S subunits. This Trichormus variabilis (strain ATCC 29413 / PCC 7937) (Anabaena variabilis) protein is Ribosomal RNA small subunit methyltransferase A.